The primary structure comprises 714 residues: MNTDGLSREKVSDSQITSEQILQDAFQLKDEPLNRPKQSIQDLDELRSFQLTKRKEYEQQLNKNRLNFGQWLRYAKWEVKHNHDFPRARSIFERALEVNVQHIPFWTHYIQFELSHKNITHARNLLDRAVTTLPRVDKLWFLYVQTEETLKNYQMVRIIFERWLSWNPNPSAWDAYINYEKRYDEYDNAREIYIRYVQIHSSGEIWLKWIDFEMNDVPIDPEQVKRIRNVFELSVDSMLASEALRGDISLAEIINKWSLWEISVKEYERARAIFQLMLKSDTIQEIITPEQRNQIYSSYTEFEKSYGDKDTIESSIMIKRKLKYEEEVNKSPSDYDSWWSYISILQQEDNNEVTRETFERAIKVIPTDAFKSTVWRRYIYIWVKYAFWEEFTMGSIENGRNIWNKALKVIPHKRFTFAKIWISFAQFEIRNDPENGLASARKILGRSIGQSSTVKPKRKLFKFYIELEQKLGEWDRVRKLYEKWLELSLVGENNLSTINSLLTYIDFEKNIQEHQRCISLFELGVRLAEDDKIFTKVNPLEYMLMQFINYYKEEMRYAEARSLYRKLVERVSTPKVWISFALFESSIPTDSQLKAFEESTEEEFEFSIDETHRETTRSVFREANDFFKHNNLKEDRAVVIEAWKQYEEANGSEESLRDITKKLPVIVKRRRLIEGEEEEYLDYIFPEDEEAKPSKISGLNAFLANAQKWMANQN.

12 HAT repeats span residues 48 to 80, 83 to 115, 117 to 149, 151 to 182, 184 to 215, 265 to 305, 315 to 347, 349 to 384, 394 to 430, 435 to 470, 472 to 510, and 555 to 586; these read SFQL…WEVK, HDFP…FELS, KNIT…TEET, KNYQ…YEKR, DEYD…FEMN, KEYE…FEKS, SIMI…ILQQ, DNNE…IWVK, GSIE…FEIR, NGLA…LEQK, GEWD…FEKN, and MRYA…FESS.

Belongs to the crooked-neck family. As to quaternary structure, associated with the spliceosome.

It localises to the nucleus. Functionally, involved in pre-mRNA splicing and cell cycle progression. Required for the spliceosome assembly and initiation of the DNA replication. The sequence is that of Pre-mRNA-splicing factor CLF1 (CLF1) from Debaryomyces hansenii (strain ATCC 36239 / CBS 767 / BCRC 21394 / JCM 1990 / NBRC 0083 / IGC 2968) (Yeast).